Consider the following 96-residue polypeptide: Small ribosomal subunit protein bS18 (96 aa).

The tract at residues Met-1–Ser-20 is disordered.

The protein belongs to the bacterial ribosomal protein bS18 family. Part of the 30S ribosomal subunit. Forms a tight heterodimer with protein bS6.

Binds as a heterodimer with protein bS6 to the central domain of the 16S rRNA, where it helps stabilize the platform of the 30S subunit. The chain is Small ribosomal subunit protein bS18 from Anaplasma phagocytophilum (strain HZ).